Here is a 1373-residue protein sequence, read N- to C-terminus: Insulin-like growth factor 1 receptor (1373 aa).

An N-terminal signal peptide occupies residues 1–30; sequence MKSGSGGGSPTSLWGLVFLSAALSLWPTSG. Cys-33 and Cys-52 are oxidised to a cystine. Asn-51, Asn-102, and Asn-135 each carry an N-linked (GlcNAc...) asparagine glycan. Disulfide bonds link Cys-150/Cys-178, Cys-182/Cys-205, Cys-192/Cys-211, Cys-215/Cys-224, Cys-219/Cys-230, Cys-231/Cys-239, Cys-235/Cys-248, Cys-251/Cys-260, Cys-264/Cys-276, Cys-282/Cys-303, Cys-307/Cys-321, Cys-324/Cys-328, and Cys-332/Cys-354. A glycan (N-linked (GlcNAc...) asparagine) is linked at Asn-245. Residue Asn-314 is glycosylated (N-linked (GlcNAc...) asparagine). N-linked (GlcNAc...) asparagine glycosylation is found at Asn-418 and Asn-439. Cys-456 and Cys-489 are disulfide-bonded. 4 Fibronectin type-III domains span residues 490–610, 611–709, 735–829, and 835–928; these read ESDV…TNAS, VPSI…TEAE, RPER…TMPA, and IPGP…VPAK. Asn-535, Asn-608, Asn-623, Asn-641, Asn-748, Asn-757, Asn-765, Asn-901, and Asn-914 each carry an N-linked (GlcNAc...) asparagine glycan. Residues 742-936 lie on the Extracellular side of the membrane; that stretch reads DVMQVANTTM…AKTTYENFMH (195 aa). Residues 937 to 960 traverse the membrane as a helical segment; it reads LIIALPVAILLIVGGLVIMLYVFH. Topologically, residues 961–1373 are cytoplasmic; it reads RKRNNSRLGN…ALPLPQSSTC (413 aa). The IRS1- and SHC1-binding motif lies at 978-981; it reads NPEY. Tyr-981 bears the Phosphotyrosine mark. The Protein kinase domain occupies 1000–1276; the sequence is ITMNRELGQG…SIKDEMEPSF (277 aa). ATP is bound by residues 1006 to 1014 and Lys-1034; that span reads LGQGSFGMV. Residue Asp-1137 is the Proton acceptor of the active site. Phosphotyrosine; by autocatalysis occurs at positions 1163, 1167, and 1168. Residues Lys-1170 and Lys-1173 each participate in a glycyl lysine isopeptide (Lys-Gly) (interchain with G-Cter in ubiquitin) cross-link. Position 1280 is a phosphoserine; by GSK3-beta (Ser-1280). Residues 1283–1373 form a disordered region; that stretch reads YSEENKPPEP…ALPLPQSSTC (91 aa). Ser-1284 carries the phosphoserine modification. The segment covering 1292–1305 has biased composition (acidic residues); sequence PEELEMELEMEPEN. The segment covering 1306–1322 has biased composition (low complexity); it reads MESVPLDPSASSASLPL. Residues 1323-1332 show a composition bias toward basic and acidic residues; that stretch reads PERHSGHKAE.

Belongs to the protein kinase superfamily. Tyr protein kinase family. Insulin receptor subfamily. Tetramer of 2 alpha and 2 beta chains linked by disulfide bonds. The alpha chains contribute to the formation of the ligand-binding domain, while the beta chain carries the kinase domain. Interacts with PIK3R1 and with the PTB/PID domains of IRS1 and SHC1 in vitro when autophosphorylated on tyrosine residues. Forms a hybrid receptor with INSR, the hybrid is a tetramer consisting of 1 alpha chain and 1 beta chain of INSR and 1 alpha chain and 1 beta chain of IGF1R. Interacts with ARRB1 and ARRB2. Interacts with GRB10. Interacts with RACK1. Interacts with SOCS1, SOCS2 and SOCS3. Interacts with 14-3-3 proteins. Interacts with NMD2. Interacts with MAP3K5. Interacts with STAT3. Found in a ternary complex with IGF1 and ITGAV:ITGB3 or ITGA6:ITGB4. Interacts (nascent precursor form) with ZFAND2B. Autophosphorylated on tyrosine residues in response to ligand binding. Autophosphorylation occurs in trans, i.e. one subunit of the dimeric receptor phosphorylates tyrosine residues on the other subunit. Autophosphorylation occurs in a sequential manner; Tyr-1167 is predominantly phosphorylated first, followed by phosphorylation of Tyr-1163 and Tyr-1168. While every single phosphorylation increases kinase activity, all three tyrosine residues in the kinase activation loop (Tyr-1163, Tyr-1167 and Tyr-1168) have to be phosphorylated for optimal activity. Can be autophosphorylated at additional tyrosine residues (in vitro). Autophosphorylated is followed by phosphorylation of juxtamembrane tyrosines and C-terminal serines. May also be phosphorylated at Tyr-1163 and Tyr-1168 by mTORC2. Phosphorylation of Tyr-981 is required for IRS1- and SHC1-binding. Phosphorylation of Ser-1280 by GSK-3beta restrains kinase activity and promotes cell surface expression, it requires a priming phosphorylation at Ser-1284. Dephosphorylated by PTPN1. Post-translationally, polyubiquitinated at Lys-1170 and Lys-1173 through both 'Lys-48' and 'Lys-29' linkages, promoting receptor endocytosis and subsequent degradation by the proteasome. Ubiquitination is facilitated by pre-existing phosphorylation. In terms of processing, sumoylated with SUMO1. Controlled by regulated intramembrane proteolysis (RIP). Undergoes metalloprotease-dependent constitutive ectodomain shedding to produce a membrane-anchored 52 kDa C-Terminal fragment which is further processed by presenilin gamma-secretase to yield an intracellular 50 kDa fragment.

Its subcellular location is the cell membrane. It carries out the reaction L-tyrosyl-[protein] + ATP = O-phospho-L-tyrosyl-[protein] + ADP + H(+). Its activity is regulated as follows. Activated by autophosphorylation at Tyr-1163, Tyr-1167 and Tyr-1168 on the kinase activation loop; phosphorylation at all three tyrosine residues is required for optimal kinase activity. Inhibited by MSC1609119A-1, BMS-754807, PQIP, benzimidazole pyridinone, isoquinolinedione, bis-azaindole, 3-cyanoquinoline, 2,4-bis-arylamino-1,3-pyrimidine, pyrrolopyrimidine, pyrrole-5-carboxaldehyde, picropodophyllin (PPP), tyrphostin derivatives. While most inhibitors bind to the ATP binding pocket, MSC1609119A-1 functions as allosteric inhibitor and binds close to the DFG motif and the activation loop. Its function is as follows. Receptor tyrosine kinase which mediates actions of insulin-like growth factor 1 (IGF1). Binds IGF1 with high affinity and IGF2 and insulin (INS) with a lower affinity. The activated IGF1R is involved in cell growth and survival control. IGF1R is crucial for tumor transformation and survival of malignant cell. Ligand binding activates the receptor kinase, leading to receptor autophosphorylation, and tyrosines phosphorylation of multiple substrates, that function as signaling adapter proteins including, the insulin-receptor substrates (IRS1/2), Shc and 14-3-3 proteins. Phosphorylation of IRSs proteins lead to the activation of two main signaling pathways: the PI3K-AKT/PKB pathway and the Ras-MAPK pathway. The result of activating the MAPK pathway is increased cellular proliferation, whereas activating the PI3K pathway inhibits apoptosis and stimulates protein synthesis. Phosphorylated IRS1 can activate the 85 kDa regulatory subunit of PI3K (PIK3R1), leading to activation of several downstream substrates, including protein AKT/PKB. AKT phosphorylation, in turn, enhances protein synthesis through mTOR activation and triggers the antiapoptotic effects of IGFIR through phosphorylation and inactivation of BAD. In parallel to PI3K-driven signaling, recruitment of Grb2/SOS by phosphorylated IRS1 or Shc leads to recruitment of Ras and activation of the ras-MAPK pathway. In addition to these two main signaling pathways IGF1R signals also through the Janus kinase/signal transducer and activator of transcription pathway (JAK/STAT). Phosphorylation of JAK proteins can lead to phosphorylation/activation of signal transducers and activators of transcription (STAT) proteins. In particular activation of STAT3, may be essential for the transforming activity of IGF1R. The JAK/STAT pathway activates gene transcription and may be responsible for the transforming activity. JNK kinases can also be activated by the IGF1R. IGF1 exerts inhibiting activities on JNK activation via phosphorylation and inhibition of MAP3K5/ASK1, which is able to directly associate with the IGF1R. When present in a hybrid receptor with INSR, binds IGF1. The chain is Insulin-like growth factor 1 receptor (Igf1r) from Mus musculus (Mouse).